A 94-amino-acid chain; its full sequence is Co-chaperonin GroES (94 aa).

Belongs to the GroES chaperonin family. As to quaternary structure, heptamer of 7 subunits arranged in a ring. Interacts with the chaperonin GroEL.

It localises to the cytoplasm. Its function is as follows. Together with the chaperonin GroEL, plays an essential role in assisting protein folding. The GroEL-GroES system forms a nano-cage that allows encapsulation of the non-native substrate proteins and provides a physical environment optimized to promote and accelerate protein folding. GroES binds to the apical surface of the GroEL ring, thereby capping the opening of the GroEL channel. The protein is Co-chaperonin GroES of Exiguobacterium sibiricum (strain DSM 17290 / CCUG 55495 / CIP 109462 / JCM 13490 / 255-15).